A 318-amino-acid chain; its full sequence is Acetyl-coenzyme A carboxylase carboxyl transferase subunit alpha (318 aa).

In terms of domain architecture, CoA carboxyltransferase C-terminal spans 32 to 293; it reads NLSDELERLR…KERLVSQLDR (262 aa).

This sequence belongs to the AccA family. In terms of assembly, acetyl-CoA carboxylase is a heterohexamer composed of biotin carboxyl carrier protein (AccB), biotin carboxylase (AccC) and two subunits each of ACCase subunit alpha (AccA) and ACCase subunit beta (AccD).

It is found in the cytoplasm. The enzyme catalyses N(6)-carboxybiotinyl-L-lysyl-[protein] + acetyl-CoA = N(6)-biotinyl-L-lysyl-[protein] + malonyl-CoA. The protein operates within lipid metabolism; malonyl-CoA biosynthesis; malonyl-CoA from acetyl-CoA: step 1/1. Functionally, component of the acetyl coenzyme A carboxylase (ACC) complex. First, biotin carboxylase catalyzes the carboxylation of biotin on its carrier protein (BCCP) and then the CO(2) group is transferred by the carboxyltransferase to acetyl-CoA to form malonyl-CoA. The chain is Acetyl-coenzyme A carboxylase carboxyl transferase subunit alpha from Saccharophagus degradans (strain 2-40 / ATCC 43961 / DSM 17024).